A 196-amino-acid chain; its full sequence is Molybdenum cofactor guanylyltransferase (196 aa).

GTP contacts are provided by residues 12 to 14, Lys-25, Asn-53, Asp-71, and Asp-101; that span reads LAG. Residue Asp-101 coordinates Mg(2+).

Belongs to the MobA family. In terms of assembly, monomer. Requires Mg(2+) as cofactor.

The protein resides in the cytoplasm. The enzyme catalyses Mo-molybdopterin + GTP + H(+) = Mo-molybdopterin guanine dinucleotide + diphosphate. Transfers a GMP moiety from GTP to Mo-molybdopterin (Mo-MPT) cofactor (Moco or molybdenum cofactor) to form Mo-molybdopterin guanine dinucleotide (Mo-MGD) cofactor. The polypeptide is Molybdenum cofactor guanylyltransferase (Bordetella petrii (strain ATCC BAA-461 / DSM 12804 / CCUG 43448)).